A 391-amino-acid chain; its full sequence is mRNA-capping enzyme subunit alpha (391 aa).

Lys63 serves as the catalytic N6-GMP-lysine intermediate. The interval Lys363–Gln391 is disordered.

This sequence belongs to the eukaryotic GTase family. As to quaternary structure, heterodimer. The mRNA-capping enzyme is composed of two separate chains alpha and beta, respectively a mRNA guanylyltransferase and an mRNA 5'-triphosphate monophosphatase.

The protein resides in the nucleus. The enzyme catalyses a 5'-end diphospho-ribonucleoside in mRNA + GTP + H(+) = a 5'-end (5'-triphosphoguanosine)-ribonucleoside in mRNA + diphosphate. Its function is as follows. Second step of mRNA capping. Transfer of the GMP moiety of GTP to the 5'-end of RNA via an enzyme-GMP covalent reaction intermediate. The protein is mRNA-capping enzyme subunit alpha (CEG1) of Yarrowia lipolytica (strain CLIB 122 / E 150) (Yeast).